Reading from the N-terminus, the 383-residue chain is Polyketide synthase 4 (383 aa).

Catalysis depends on cysteine 164, which acts as the Nucleophile and monoketide coumarate intermediate.

It belongs to the thiolase-like superfamily. Chalcone/stilbene synthases family. As to quaternary structure, homodimer. As to expression, expressed in fruits.

The catalysed reaction is 4-coumaroyl-CoA + malonyl-CoA + H2O + H(+) = 4-hydroxybenzalacetone + 2 CO2 + 2 CoA. It carries out the reaction (E)-4-coumaroyl-CoA + 3 malonyl-CoA + 3 H(+) = 2',4,4',6'-tetrahydroxychalcone + 3 CO2 + 4 CoA. It functions in the pathway secondary metabolite biosynthesis; flavonoid biosynthesis. Inhibited by glutathione. Bifunctional polyketide synthase producing both 4-hydroxybenzalacetone and naringenin chalcone. Can use p-coumaryl-CoA and ferulyl-CoA as substrates. Catalyzes the initial key reaction step in the biosynthesis of phenylbutanoids. The sequence is that of Polyketide synthase 4 (PKS4) from Rubus idaeus (Raspberry).